We begin with the raw amino-acid sequence, 461 residues long: Cysteine--tRNA ligase (461 aa).

C30 is a Zn(2+) binding site. The short motif at 32–42 (VTVYDLCHIGH) is the 'HIGH' region element. Positions 211, 236, and 240 each coordinate Zn(2+). A 'KMSKS' region motif is present at residues 268–272 (KMSKS). K271 contacts ATP.

This sequence belongs to the class-I aminoacyl-tRNA synthetase family. In terms of assembly, monomer. It depends on Zn(2+) as a cofactor.

The protein resides in the cytoplasm. It catalyses the reaction tRNA(Cys) + L-cysteine + ATP = L-cysteinyl-tRNA(Cys) + AMP + diphosphate. The protein is Cysteine--tRNA ligase of Shewanella sp. (strain MR-7).